Reading from the N-terminus, the 199-residue chain is Ribonuclease P protein subunit p25 (199 aa).

The span at 1–11 (MENFRKVRSEE) shows a compositional bias: basic and acidic residues. Disordered regions lie at residues 1 to 31 (MENFRKVRSEEAPAGDGDEGGSPNSGPFADL) and 146 to 199 (PRQL…DRTA). Position 172 is a phosphoserine (Ser-172). Residues 190 to 199 (PEAENEDRTA) show a composition bias toward acidic residues.

The protein belongs to the histone-like Alba family. As to quaternary structure, component of nuclear RNase P and RNase MRP ribonucleoproteins. RNase P consists of a catalytic RNA moiety and 10 different protein chains; POP1, POP4, POP5, POP7, RPP14, RPP21, RPP25, RPP30, RPP38 and RPP40. Within the RNase P complex, POP1, POP7 and RPP25 form the 'finger' subcomplex, POP5, RPP14, RPP40 and homodimeric RPP30 form the 'palm' subcomplex, and RPP21, POP4 and RPP38 form the 'wrist' subcomplex. All subunits of the RNase P complex interact with the catalytic RNA. Several subunits of RNase P are also part of the RNase MRP complex. RNase MRP consists of a catalytic RNA moiety and about 8 protein subunits; POP1, POP7, RPP25, RPP30, RPP38, RPP40 and possibly also POP4 and POP5. POP7 forms a heterodimer with RPP25 that binds to the P3 stem loop of the catalytic RNA.

The protein localises to the nucleus. Its subcellular location is the nucleolus. Functionally, component of ribonuclease P, a ribonucleoprotein complex that generates mature tRNA molecules by cleaving their 5'-ends. Also a component of the MRP ribonuclease complex, which cleaves pre-rRNA sequences. In Mus musculus (Mouse), this protein is Ribonuclease P protein subunit p25 (Rpp25).